Here is a 143-residue protein sequence, read N- to C-terminus: UPF0179 protein PTO0851 (143 aa).

This sequence belongs to the UPF0179 family.

The protein is UPF0179 protein PTO0851 of Picrophilus torridus (strain ATCC 700027 / DSM 9790 / JCM 10055 / NBRC 100828 / KAW 2/3).